The following is a 270-amino-acid chain: Hydroxyethylthiazole kinase (270 aa).

M44 serves as a coordination point for substrate. 2 residues coordinate ATP: R119 and T165. G192 lines the substrate pocket.

This sequence belongs to the Thz kinase family. The cofactor is Mg(2+).

The enzyme catalyses 5-(2-hydroxyethyl)-4-methylthiazole + ATP = 4-methyl-5-(2-phosphooxyethyl)-thiazole + ADP + H(+). It functions in the pathway cofactor biosynthesis; thiamine diphosphate biosynthesis; 4-methyl-5-(2-phosphoethyl)-thiazole from 5-(2-hydroxyethyl)-4-methylthiazole: step 1/1. In terms of biological role, catalyzes the phosphorylation of the hydroxyl group of 4-methyl-5-beta-hydroxyethylthiazole (THZ). This is Hydroxyethylthiazole kinase from Corynebacterium efficiens (strain DSM 44549 / YS-314 / AJ 12310 / JCM 11189 / NBRC 100395).